The primary structure comprises 1282 residues: Protein crumbs homolog 2 (1282 aa).

The N-terminal stretch at 1 to 35 (MALVGPRIWGPRRDIYPLLLLLLLLLLLLLPWVPA) is a signal peptide. Over 36-1221 (GLVPPETPSV…PLPLPFPLLE (1186 aa)) the chain is Extracellular. The region spanning 71–110 (ELGGCATQPCHHGALCVPQGPDPNSFRCYCVPGFQGPHCE) is the EGF-like 1 domain. Intrachain disulfides connect Cys75–Cys86, Cys80–Cys98, Cys100–Cys109, Cys116–Cys127, Cys121–Cys136, Cys138–Cys147, Cys154–Cys165, Cys159–Cys174, Cys176–Cys185, Cys192–Cys203, Cys197–Cys212, Cys214–Cys224, Cys231–Cys242, Cys236–Cys251, Cys253–Cys262, Cys269–Cys280, Cys274–Cys310, Cys312–Cys321, Cys328–Cys339, Cys333–Cys348, Cys350–Cys359, Cys366–Cys377, Cys371–Cys386, Cys388–Cys397, Cys404–Cys415, Cys409–Cys428, and Cys430–Cys439. An EGF-like 2; calcium-binding domain is found at 112–148 (DIDECASRPCQHGGTCQNLADHYECHCPLGYAGVTCE). Residues 150 to 186 (EVDECSSAPCLHGGSCLDGVGSYRCVCAPGYAGANCQ) form the EGF-like 3; calcium-binding domain. An EGF-like 4; calcium-binding domain is found at 188 to 225 (DVDECQSQPCAHGGVCHDLVNGFRCDCADTGYEGARCE). 2 EGF-like domains span residues 227–263 (EVLECASAPCAHNASCLDGFRSFRCLCWPGFSGERCE) and 265–322 (DEDE…NDCS). Residue Asn239 is glycosylated (N-linked (GlcNAc...) asparagine). Ser271 carries O-linked (Glc...) serine glycosylation. Residues 324-360 (DVDECASGPCLNGGSCQDLPNGFQCYCQDGYTGLTCQ) enclose the EGF-like 7; calcium-binding domain. The 37-residue stretch at 362-398 (DMDECQSEPCLHGGTCSDTVAGYICQCPEAWGGHDCS) folds into the EGF-like 8; calcium-binding domain. Residues 400–440 (QLTGCQGHTCPLAATCIPTFKSGLHGYFCRCPPGTYGPFCG) form the EGF-like 9 domain. Residue Asn442 is glycosylated (N-linked (GlcNAc...) asparagine). Residues 444–607 (TFSVVSGSSV…ELKGTVLLGC (164 aa)) form the Laminin G-like 1 domain. 4 cysteine pairs are disulfide-bonded: Cys583–Cys607, Cys613–Cys624, Cys618–Cys633, and Cys635–Cys644. The EGF-like 10 domain occupies 609–645 (RREPCQPLPCAHGGACVDLWTHFRCDCPRPYRGATCT). Positions 649–808 (PAATFGLGGA…GQSSNLTQGC (160 aa)) constitute a Laminin G-like 2 domain. 4 N-linked (GlcNAc...) asparagine glycosylation sites follow: Asn672, Asn693, Asn789, and Asn803. 4 cysteine pairs are disulfide-bonded: Cys769/Cys808, Cys814/Cys825, Cys819/Cys834, and Cys836/Cys845. Positions 810-846 (SEDTCNPNPCFNGGTCHVTWNDFYCTCSENFTGPTCA) constitute an EGF-like 11 domain. 4 N-linked (GlcNAc...) asparagine glycosylation sites follow: Asn839, Asn889, Asn929, and Asn1006. The Laminin G-like 3 domain occupies 872 to 1051 (VAEATFREGP…PGSPAVSLGC (180 aa)). 13 disulfide bridges follow: Cys1010-Cys1051, Cys1057-Cys1068, Cys1062-Cys1077, Cys1079-Cys1088, Cys1095-Cys1105, Cys1100-Cys1115, Cys1117-Cys1126, Cys1135-Cys1147, Cys1141-Cys1156, Cys1158-Cys1167, Cys1174-Cys1185, Cys1179-Cys1194, and Cys1196-Cys1205. 4 EGF-like domains span residues 1053–1089 (GGPVCSPSPCLHGGACRDLFDAFACSCGPAWEGPRCE), 1091–1127 (RADPCRSTPCVRGQCHARPDGRFECRCPPGFSGPRCR), 1131–1168 (LPQGCNLNSTCKDGAPCEGGPLGTNCSCQEGLAGLRCQ), and 1170–1206 (LDKPCEASPCLNGGTCRVASGIFECTCSAGFSGQFCE). N-linked (GlcNAc...) asparagine glycans are attached at residues Asn1138 and Asn1155. A helical transmembrane segment spans residues 1222 to 1242 (VAVPAACACLLLLLLGLLSGI). The Cytoplasmic segment spans residues 1243–1282 (LAARKRRQSEGTYSPSQQEVAGARLEMDSVLKVPPEERLI). Residues 1246–1282 (RKRRQSEGTYSPSQQEVAGARLEMDSVLKVPPEERLI) are interaction with EPB41L5.

Belongs to the Crumbs protein family. Interacts (via intracellular domain) with EPB41L5. In terms of processing, O-glucosylated by POGLUT1 at Ser-271; consists of an O-glucose trisaccharide, in which the O-glucose is elongated by the addition of two xylose residues. O-glucosylation is required for localization at the plasma membrane. As to expression, in the adult eye, strongly expressed in the outer nuclear layer, containing the cell bodies of the photoreceptor cells, and in the inner nuclear layer, containing the cell bodies of the horizontal, bipolar, amacrine, and Mueller glial cells. Also expressed in some cells in the ganglion cell layer (or may be displaced amacrine cells rather than ganglion cells).

The protein resides in the apical cell membrane. Apical polarity protein that plays a central role during the epithelial-to-mesenchymal transition (EMT) at gastrulation, when newly specified mesodermal cells move inside the embryo. Acts by promoting cell ingression, the process by which cells leave the epithelial epiblast and move inside the embryo to form a new tissue layer. The anisotropic distribution of CRB2 and MYH10/myosin-IIB at cell edges define which cells will ingress: cells with high apical CRB2 are probably extruded from the epiblast by neighboring cells with high levels of apical MYH10/myosin-IIB. Also required for maintenance of the apical polarity complex during development of the cortex. This is Protein crumbs homolog 2 from Mus musculus (Mouse).